Here is a 276-residue protein sequence, read N- to C-terminus: NH(3)-dependent NAD(+) synthetase (276 aa).

Position 43–50 (43–50) interacts with ATP; sequence GISGGVDS. Aspartate 49 contacts Mg(2+). Arginine 146 contributes to the deamido-NAD(+) binding site. Residue threonine 166 participates in ATP binding. Mg(2+) is bound at residue glutamate 171. Deamido-NAD(+)-binding residues include lysine 179 and aspartate 186. The ATP site is built by lysine 195 and threonine 217. 266–267 is a binding site for deamido-NAD(+); sequence HK.

The protein belongs to the NAD synthetase family. In terms of assembly, homodimer.

It carries out the reaction deamido-NAD(+) + NH4(+) + ATP = AMP + diphosphate + NAD(+) + H(+). Its pathway is cofactor biosynthesis; NAD(+) biosynthesis; NAD(+) from deamido-NAD(+) (ammonia route): step 1/1. Functionally, catalyzes the ATP-dependent amidation of deamido-NAD to form NAD. Uses ammonia as a nitrogen source. The chain is NH(3)-dependent NAD(+) synthetase from Aliivibrio fischeri (strain ATCC 700601 / ES114) (Vibrio fischeri).